Consider the following 224-residue polypeptide: 7-cyano-7-deazaguanine synthase (224 aa).

ATP is bound at residue Phe10–Leu20. 4 residues coordinate Zn(2+): Cys193, Cys201, Cys204, and Cys207.

This sequence belongs to the QueC family. Requires Zn(2+) as cofactor.

It carries out the reaction 7-carboxy-7-deazaguanine + NH4(+) + ATP = 7-cyano-7-deazaguanine + ADP + phosphate + H2O + H(+). The protein operates within purine metabolism; 7-cyano-7-deazaguanine biosynthesis. Its function is as follows. Catalyzes the ATP-dependent conversion of 7-carboxy-7-deazaguanine (CDG) to 7-cyano-7-deazaguanine (preQ(0)). This is 7-cyano-7-deazaguanine synthase from Neisseria gonorrhoeae (strain ATCC 700825 / FA 1090).